Reading from the N-terminus, the 225-residue chain is Receptor-transporting protein 2 (225 aa).

The Cytoplasmic portion of the chain corresponds to 1–196 (MCTSLTTCEW…RAQAGSGYNF (196 aa)). The segment at 52–161 (ASGRFHCSWC…AEFCEACQEG (110 aa)) adopts a 3CxxC-type zinc-finger fold. Residues 197 to 219 (LSLRWCLFWASLCLLVVYLQFSF) form a helical membrane-spanning segment. Topologically, residues 220–225 (LSPAFF) are extracellular.

The protein belongs to the TMEM7 family. In terms of assembly, interacts with olfactory receptors. In terms of tissue distribution, expressed in circumvallate papillae and testis.

It is found in the cell membrane. Its function is as follows. Specifically promotes functional cell surface expression of olfactory receptors, but not of other GPCRs. This Homo sapiens (Human) protein is Receptor-transporting protein 2 (RTP2).